The sequence spans 502 residues: Cytochrome P450 monooxygenase prhN (502 aa).

A helical transmembrane segment spans residues 14 to 30 (SGALLIVGILLLRWALW). N-linked (GlcNAc...) asparagine glycosylation occurs at N165. Residue C443 coordinates heme. Residue N474 is glycosylated (N-linked (GlcNAc...) asparagine).

Belongs to the cytochrome P450 family. Heme serves as cofactor.

It localises to the membrane. It functions in the pathway secondary metabolite biosynthesis; terpenoid biosynthesis. Functionally, cytochrome P450 monooxygenase; part of the gene cluster that mediates the biosynthesis of paraherquonin, a meroterpenoid with a unique, highly congested hexacyclic molecular architecture. The first step of the pathway is the synthesis of 3,5-dimethylorsellinic acid (DMOA) by the polyketide synthase prhL. Synthesis of DMOA is followed by farnesylation by the prenyltransferase prhE, methylesterification by the methyl-transferase prhM, epoxidation of the prenyl chain by the flavin-dependent monooxygenase prhF, and cyclization of the farnesyl moiety by the terpene cyclase prhH, to yield the tetracyclic intermediate, protoaustinoid A. The short chain dehydrogenase prhI then oxidizes the C-3 alcohol group of the terpene cyclase product to transform protoaustinoid A into protoaustinoid B. The FAD-binding monooxygenase prhJ catalyzes the oxidation of protoaustinoid B into preaustinoid A which is further oxidized into preaustinoid A1 by FAD-binding monooxygenase phrK. Finally, prhA leads to berkeleydione via the berkeleyone B intermediate. PrhA is a multifunctional dioxygenase that first desaturates at C5-C6 to form berkeleyone B, followed by rearrangement of the A/B-ring to form the cycloheptadiene moiety in berkeleydione. Berkeleydione serves as the key intermediate for the biosynthesis of paraherquonin as well as many other meroterpenoids. The cytochrome P450 monooxygenases prhB, prhD, and prhN, as well as the isomerase prhC, are probably involved in the late stage of paraherquonin biosynthesis, after the production of berkeleydione. Especially prhC might be a multifunctional enzyme that catalyzes the D-ring expansion via intramolecular methoxy rearrangement, as well as the hydrolysis of the expanded D-ring. The chain is Cytochrome P450 monooxygenase prhN from Penicillium brasilianum.